A 126-amino-acid chain; its full sequence is Major sperm protein 2 (126 aa).

N-acetylalanine is present on Ala2. Positions 8-125 (DIATMPNQKV…RRKNLPIEYN (118 aa)) constitute an MSP domain.

As to expression, sperm.

It localises to the cell projection. The protein resides in the pseudopodium. Its subcellular location is the cytoplasm. The protein localises to the cytoskeleton. In terms of biological role, central component in molecular interactions underlying sperm crawling. Forms an extensive filament system that extends from sperm villipoda, along the leading edge of the pseudopod. The chain is Major sperm protein 2 (MSP-2) from Globodera rostochiensis (Golden nematode worm).